Here is a 418-residue protein sequence, read N- to C-terminus: NADH-quinone oxidoreductase subunit D (418 aa).

This sequence belongs to the complex I 49 kDa subunit family. NDH-1 is composed of 14 different subunits. Subunits NuoB, C, D, E, F, and G constitute the peripheral sector of the complex.

Its subcellular location is the cell inner membrane. The catalysed reaction is a quinone + NADH + 5 H(+)(in) = a quinol + NAD(+) + 4 H(+)(out). NDH-1 shuttles electrons from NADH, via FMN and iron-sulfur (Fe-S) centers, to quinones in the respiratory chain. The immediate electron acceptor for the enzyme in this species is believed to be ubiquinone. Couples the redox reaction to proton translocation (for every two electrons transferred, four hydrogen ions are translocated across the cytoplasmic membrane), and thus conserves the redox energy in a proton gradient. The protein is NADH-quinone oxidoreductase subunit D of Neisseria gonorrhoeae (strain ATCC 700825 / FA 1090).